We begin with the raw amino-acid sequence, 395 residues long: Putative transport protein sll0063 (395 aa).

8 helical membrane passes run Leu-24 to Ala-44, Ile-50 to Leu-70, Phe-91 to Ala-111, Val-180 to Leu-200, Ala-245 to Leu-265, Val-269 to Ala-289, Met-295 to Ala-315, and Phe-328 to Val-348.

Belongs to the autoinducer-2 exporter (AI-2E) (TC 2.A.86) family.

Its subcellular location is the cell membrane. In Synechocystis sp. (strain ATCC 27184 / PCC 6803 / Kazusa), this protein is Putative transport protein sll0063.